The primary structure comprises 319 residues: Inactive hydroxysteroid dehydrogenase-like protein 1 (319 aa).

The segment at 2–82 (AAVDSFQLLY…CGASEAIAKA (81 aa)) is required for mitochondria translocation. NADP(+) contacts are provided by residues 74–80 (GASEAIA), K99, and D125.

Belongs to the short-chain dehydrogenases/reductases (SDR) family. 17-beta-HSD 3 subfamily.

The protein resides in the mitochondrion. This Danio rerio (Zebrafish) protein is Inactive hydroxysteroid dehydrogenase-like protein 1 (hsdl1).